The primary structure comprises 104 residues: AVIToxin-VAR1 (104 aa).

The N-terminal stretch at 1–19 is a signal peptide; it reads MRSLLCAPLLLLLLSAGES. 5 disulfides stabilise this stretch: C26/C38, C32/C50, C37/C78, C60/C86, and C80/C96.

This sequence belongs to the AVIT (prokineticin) family. Expressed by the venom gland.

Its subcellular location is the secreted. Functionally, potent agonist for both PKR1/PROKR1 and PKR2/PROKR2. Potently contracts gastrointestinal (GI) smooth muscle. The protein is AVIToxin-VAR1 of Varanus varius (Lace monitor lizard).